Reading from the N-terminus, the 24-residue chain is Brevinin-1Bb (24 aa).

Cysteine 18 and cysteine 24 are disulfide-bonded.

As to expression, expressed by the skin glands.

It localises to the secreted. In terms of biological role, antibacterial activity against Gram-positive bacterium S.aureus and Gram-negative bacterium E.coli. Has activity against C.albicans. This chain is Brevinin-1Bb, found in Lithobates berlandieri (Rio Grande leopard frog).